A 462-amino-acid polypeptide reads, in one-letter code: Putative amidase AmiB2 (462 aa).

Active-site charge relay system residues include Lys81 and Ser155. The active-site Acyl-ester intermediate is Ser179.

The protein belongs to the amidase family.

The catalysed reaction is a monocarboxylic acid amide + H2O = a monocarboxylate + NH4(+). This is Putative amidase AmiB2 (amiB2) from Mycobacterium bovis (strain ATCC BAA-935 / AF2122/97).